A 383-amino-acid chain; its full sequence is Meiotically up-regulated gene 93 protein (383 aa).

One copy of the TPR repeat lies at 75 to 108 (KKVIWRRGLAYLRLGHPHLANRDWEHSLELDPNN).

Its subcellular location is the cytoplasm. It localises to the nucleus. Has a role in meiosis. The chain is Meiotically up-regulated gene 93 protein (mug93) from Schizosaccharomyces pombe (strain 972 / ATCC 24843) (Fission yeast).